The sequence spans 1712 residues: Probable ATP-dependent RNA helicase DDX60 (1712 aa).

The Helicase ATP-binding domain maps to Leu772–Lys939. Ala785–Thr792 is a binding site for ATP. Residues Asp889–His892 carry the DEVH box motif. The Helicase C-terminal domain occupies Tyr1226–Leu1370.

The protein belongs to the helicase family. In terms of assembly, interacts with EXOSC1, EXOSC4, RIGI, IFIH1/MDA5 and DHX58/LGP2. Brain, lymph node, prostate, stomach, thyroid, tongue, trachea, uterus, skeletal muscle, spleen, kidney, liver and small intestine.

It localises to the cytoplasm. The catalysed reaction is ATP + H2O = ADP + phosphate + H(+). Its function is as follows. Positively regulates RIGI- and IFIH1/MDA5-dependent type I interferon and interferon inducible gene expression in response to viral infection. Binds ssRNA, dsRNA and dsDNA and can promote the binding of RIGI to dsRNA. Exhibits antiviral activity against hepatitis C virus and vesicular stomatitis virus (VSV). The chain is Probable ATP-dependent RNA helicase DDX60 (DDX60) from Homo sapiens (Human).